A 345-amino-acid chain; its full sequence is Phosphoribosylformylglycinamidine cyclo-ligase (345 aa).

The protein belongs to the AIR synthase family.

The protein localises to the cytoplasm. It carries out the reaction 2-formamido-N(1)-(5-O-phospho-beta-D-ribosyl)acetamidine + ATP = 5-amino-1-(5-phospho-beta-D-ribosyl)imidazole + ADP + phosphate + H(+). It participates in purine metabolism; IMP biosynthesis via de novo pathway; 5-amino-1-(5-phospho-D-ribosyl)imidazole from N(2)-formyl-N(1)-(5-phospho-D-ribosyl)glycinamide: step 2/2. This chain is Phosphoribosylformylglycinamidine cyclo-ligase, found in Bifidobacterium longum subsp. infantis (strain ATCC 15697 / DSM 20088 / JCM 1222 / NCTC 11817 / S12).